Consider the following 392-residue polypeptide: Mycofactocin maturase MftC (392 aa).

The region spanning 18–228 is the Radical SAM core domain; it reads LDAPICLTWE…YDWLVAKGDR (211 aa). [4Fe-4S] cluster-binding residues include C32, C36, C39, C253, C260, C271, C312, C315, C321, C325, and C343. Positions 354 to 367 are enriched in basic and acidic residues; that stretch reads KERVKPKPSGDHSR. A disordered region spans residues 354–377; it reads KERVKPKPSGDHSRGTKQGPVALK.

The protein belongs to the radical SAM superfamily. MftC family. The cofactor is [4Fe-4S] cluster.

The enzyme catalyses [mycofactocin precursor peptide]-C-terminal glycyl-L-valyl-L-tyrosine + S-adenosyl-L-methionine = [mycofactocin precursor peptide]-C-terminal glycyl-N-{[2-(4-hydroxyphenyl)ethenyl]-3-methylbutanamide} + 5'-deoxyadenosine + L-methionine + CO2. The catalysed reaction is [mycofactocin precursor peptide]-C-terminal glycyl-N-{[2-(4-hydroxyphenyl)ethenyl]-3-methylbutanamide} + AH2 + S-adenosyl-L-methionine = [mycofactocin precursor peptide]-C-terminal glycyl-N-{5-[(4-hydroxyphenyl)methyl]-4,4-dimethyl-2-oxopyrrolidin-3-yl}acetamide + 5'-deoxyadenosine + L-methionine + A + H(+). Functionally, radical S-adenosylmethionine (SAM) enzyme responsible for the first step of the biosynthesis of the enzyme cofactor mycofactocin (MFT). Catalyzes two reactions at the C-terminus of the mycofactocin precursor (the MftA peptide). The first one is the oxidative decarboxylation of the C-terminal L-tyrosine of MftA, forming an unsaturated tyramine moiety. The second reaction is the cross-linking of the tyramine with the penultimate L-valine residue, forming a five-membered lactam ring. Its activity requires the presence of the MftB chaperone. Is required for the in vivo ethanol assimilation in M.smegmatis. This chain is Mycofactocin maturase MftC, found in Mycolicibacterium smegmatis (strain ATCC 700084 / mc(2)155) (Mycobacterium smegmatis).